The following is a 2365-amino-acid chain: Voltage-dependent T-type calcium channel subunit alpha-1H (2365 aa).

The segment at 1–63 (MTEGTLAADE…PGTECGADLG (63 aa)) is disordered. The Cytoplasmic portion of the chain corresponds to 1 to 100 (MTEGTLAADE…SWCLRLVSRR (100 aa)). The segment covering 16 to 36 (GASPSAPAAPVRASPASPGVP) has biased composition (low complexity). The stretch at 87-422 (TRPRSWCLRL…LCLVVIATQF (336 aa)) is one I repeat. A helical membrane pass occupies residues 101 to 119 (WFEHISMLVIMLNCVTLGM). At 120–141 (FRPCEDVECRSERCSILEAFDD) the chain is on the extracellular side. Aspartate 140 lines the Zn(2+) pocket. A helical transmembrane segment spans residues 142–160 (FIFAFFAVEMVIKMVALGL). Residues 161–169 (FGQKCYLGD) are Cytoplasmic-facing. The chain crosses the membrane as a helical span at residues 170–184 (TWNRLDFFIVMAGMM). Residues 185–193 (EYSLDGHNV) are Extracellular-facing. The Zn(2+) site is built by aspartate 189 and histidine 191. N-linked (GlcNAc...) asparagine glycosylation occurs at asparagine 192. A helical transmembrane segment spans residues 194 to 212 (SLSAIRTVRVLRPLRAINR). Topologically, residues 213 to 232 (VPSMRILVTLLLDTLPMLGN) are cytoplasmic. Residues 233 to 253 (VLLLCFFVFFIFGIVGVQLWA) form a helical membrane-spanning segment. At 254–394 (GLLRNRCFLD…YYVMDAHSFY (141 aa)) the chain is on the extracellular side. Residue asparagine 271 is glycosylated (N-linked (GlcNAc...) asparagine). The helical transmembrane segment at 395–419 (NFIYFILLIIVGSFFMINLCLVVIA) threads the bilayer. The Cytoplasmic portion of the chain corresponds to 420 to 790 (TQFSETKQRE…SKLRRIVDSK (371 aa)). 3 disordered regions span residues 490–573 (VDPS…SESV), 618–656 (PSGA…SPSP), and 737–761 (GDCR…RWRP). Over residues 500–532 (GPRRRPRRAGRRTASVHHLVYHHHHHHHHHYHF) the composition is skewed to basic residues. Pro residues predominate over residues 557–566 (PPSPPSPGHG). The span at 621 to 631 (AVNSKGSTSSR) shows a compositional bias: polar residues. The II repeat unit spans residues 776-1015 (WASFSSKLRR…LLVAILVEGF (240 aa)). Residues 791–811 (YFNRGIMAAILVNTLSMGVEY) traverse the membrane as a helical segment. At 812-824 (HEQPDELTNALEI) the chain is on the extracellular side. A helical membrane pass occupies residues 825–846 (SNIVFTSMFALEMLLKLLACGP). Residues 847-852 (LGYIRN) lie on the Cytoplasmic side of the membrane. Residues 853–871 (PYNIFDGIVVIISVWEIVG) form a helical membrane-spanning segment. Residues 872–879 (QADGGLSV) are Extracellular-facing. A helical membrane pass occupies residues 880–903 (LRTFRLLRVLKLVRFLPALRRQLV). At 904–914 (VLMRTMDNVAT) the chain is on the cytoplasmic side. A helical membrane pass occupies residues 915 to 935 (FCMLLMLFIFIFSILGMHLFG). Over 936-987 (CKFSLKTDSGDTVPDRKNFDSLLWAIVTVFQILTQEDWNVVLYNGMASTSSW) the chain is Extracellular. The helical transmembrane segment at 988-1012 (AALYFVALMTFGNYVLFNLLVAILV) threads the bilayer. Residues 1013 to 1301 (EGFQAEGDAT…NRLRVSCQKV (289 aa)) are Cytoplasmic-facing. Positions 1059-1215 (PNGHLEGRGS…HRSTMDLCPP (157 aa)) are disordered. The segment covering 1130–1147 (GPNSAGSSRRSSWNSLGR) has biased composition (low complexity). Positions 1199 to 1209 (RRAESLGHRST) are enriched in basic and acidic residues. The stretch at 1292–1569 (NRLRVSCQKV…MFVGVVVENF (278 aa)) is one III repeat. Residues 1302-1324 (IAHKMFDHVVLVFIFLNCITIAL) traverse the membrane as a helical segment. Over 1325–1342 (ERPDIDPGSTERAFLSVS) the chain is Extracellular. The helical transmembrane segment at 1343–1363 (NYIFTAIFVVEMMVKVVALGL) threads the bilayer. Residues 1364-1373 (LWGEHAYLQS) lie on the Cytoplasmic side of the membrane. The chain crosses the membrane as a helical span at residues 1374-1393 (SWNVLDGLLVLVSLVDIIVA). Over 1394-1407 (VASAGGAKILGVLR) the chain is Extracellular. A helical membrane pass occupies residues 1408–1429 (VLRLLRTLRPLRVISRAPGLKL). At 1430–1439 (VVETLISSLR) the chain is on the cytoplasmic side. A helical transmembrane segment spans residues 1440 to 1463 (PIGNIVLICCAFFIIFGILGVQLF). Residues 1464–1540 (KGKFYYCEGT…DQQPVQNHNP (77 aa)) lie on the Extracellular side of the membrane. N-linked (GlcNAc...) asparagine glycosylation occurs at asparagine 1477. Residues 1541 to 1566 (WMLLYFISFLLIVSFFVLNMFVGVVV) form a helical membrane-spanning segment. Residues 1567 to 1627 (ENFHKCRQHQ…RRSIHSLCTS (61 aa)) lie on the Cytoplasmic side of the membrane. Residues 1613–1874 (DYSHTRRSIH…VVVAVLMKHL (262 aa)) form an IV repeat. Residues 1628-1648 (HYLDLFITFIICLNVITMSME) form a helical membrane-spanning segment. Residues 1649–1662 (HYNQPKSLDEALKY) are Extracellular-facing. A helical membrane pass occupies residues 1663–1684 (CNYVFTIVFVFEAALKLVAFGF). The Cytoplasmic segment spans residues 1685 to 1691 (RRFFKDR). Residues 1692–1710 (WNQLDLAIVLLSIMGIALE) form a helical membrane-spanning segment. At 1711 to 1724 (EIEMNAALPINPTI) the chain is on the extracellular side. The helical transmembrane segment at 1725–1748 (IRIMRVLRIARVLKLLKMATGMRA) threads the bilayer. At 1749 to 1762 (LLDTVVQALPQVGN) the chain is on the cytoplasmic side. Residues 1763-1783 (LGLLFMLLFFIYAALGVELFG) traverse the membrane as a helical segment. The Extracellular portion of the chain corresponds to 1784–1846 (RLECSEDNPC…KHCLSYLPAL (63 aa)). A helical membrane pass occupies residues 1847-1874 (SPVYFVTFVLVAQFVLVNVVVAVLMKHL). At 1875-2365 (EESNKEARED…APDDSGDEPV (491 aa)) the chain is on the cytoplasmic side. 2 stretches are compositionally biased toward polar residues: residues 1897–1916 (QGST…TEPD) and 1967–1983 (VTSA…SFQV). Disordered regions lie at residues 1897–1920 (QGST…TPNL), 1967–1999 (VTSA…PLCA), 2053–2264 (APLG…GERW), and 2321–2365 (ELSM…DEPV). A compositionally biased stretch (acidic residues) spans 2092 to 2102 (DDAEAADPADE). The span at 2172-2187 (GDGHLESGEVRARASE) shows a compositional bias: basic and acidic residues.

It belongs to the calcium channel alpha-1 subunit (TC 1.A.1.11) family. CACNA1H subfamily. In terms of assembly, interacts (via N-terminal cytoplasmic domain) with STAC. Post-translationally, in response to raising of intracellular calcium, the T-type channels are activated by CaM-kinase II. As to expression, is highly expressed in lumbosacral and thoracolumbar dorsal root ganglion neurons.

It localises to the cell membrane. It catalyses the reaction Ca(2+)(in) = Ca(2+)(out). Voltage-sensitive calcium channel that gives rise to T-type calcium currents. T-type calcium channels belong to the 'low-voltage activated (LVA)' group. A particularity of this type of channel is an opening at quite negative potentials, and a voltage-dependent inactivation. T-type channels serve pacemaking functions in both central neurons and cardiac nodal cells and support calcium signaling in secretory cells and vascular smooth muscle. They may also be involved in the modulation of firing patterns of neurons. In the adrenal zona glomerulosa, participates in the signaling pathway leading to aldosterone production in response to either AGT/angiotensin II, or hyperkalemia. The protein is Voltage-dependent T-type calcium channel subunit alpha-1H (Cacna1h) of Mus musculus (Mouse).